We begin with the raw amino-acid sequence, 253 residues long: Ribosomal RNA small subunit methyltransferase J (253 aa).

S-adenosyl-L-methionine contacts are provided by residues E123–R124 and D176.

Belongs to the methyltransferase superfamily. RsmJ family.

The protein resides in the cytoplasm. It catalyses the reaction guanosine(1516) in 16S rRNA + S-adenosyl-L-methionine = N(2)-methylguanosine(1516) in 16S rRNA + S-adenosyl-L-homocysteine + H(+). Functionally, specifically methylates the guanosine in position 1516 of 16S rRNA. This is Ribosomal RNA small subunit methyltransferase J from Magnetococcus marinus (strain ATCC BAA-1437 / JCM 17883 / MC-1).